Reading from the N-terminus, the 115-residue chain is Beta-2-microglobulin (115 aa).

An N-terminal signal peptide occupies residues 1–16 (MKIALVLLSLLALTLA). In terms of domain architecture, Ig-like C1-type spans 22–113 (PPVVKVYTAE…GNPSKKYRLD (92 aa)).

It belongs to the beta-2-microglobulin family. Heterodimer of an alpha chain and a beta chain. Beta-2-microglobulin is the beta-chain of major histocompatibility complex class I molecules.

The protein resides in the secreted. Functionally, component of the class I major histocompatibility complex (MHC). Involved in the presentation of peptide antigens to the immune system. In Xenopus laevis (African clawed frog), this protein is Beta-2-microglobulin (b2m).